The primary structure comprises 206 residues: Hypoxanthine-guanine phosphoribosyltransferase (206 aa).

Residues 110 to 118, Lys-154, and 181 to 187 contribute to the GMP site; these read DEVDDTRTT and WIMYPWE. Asp-114 functions as the Proton acceptor in the catalytic mechanism.

It belongs to the purine/pyrimidine phosphoribosyltransferase family. In terms of assembly, dimer. It depends on Mg(2+) as a cofactor.

The protein localises to the endoplasmic reticulum. The catalysed reaction is IMP + diphosphate = hypoxanthine + 5-phospho-alpha-D-ribose 1-diphosphate. It carries out the reaction GMP + diphosphate = guanine + 5-phospho-alpha-D-ribose 1-diphosphate. In terms of biological role, converts guanine to guanosine monophosphate, and hypoxanthine to inosine monophosphate. Transfers the 5-phosphoribosyl group from 5-phosphoribosylpyrophosphate onto the purine. Plays a central role in the generation of purine nucleotides through the purine salvage pathway. The sequence is that of Hypoxanthine-guanine phosphoribosyltransferase (hpt1) from Schizosaccharomyces pombe (strain 972 / ATCC 24843) (Fission yeast).